Reading from the N-terminus, the 739-residue chain is Poly(A) polymerase alpha (739 aa).

Residues 1-17 (MPFPVTTQGSQQTQPPQ) are compositionally biased toward low complexity. Residues 1-22 (MPFPVTTQGSQQTQPPQRHYGI) form a disordered region. Phosphoserine is present on residues Ser-10 and Ser-24. ATP-binding positions include 100–102 (FGS), Thr-109, 113–115 (DID), Asp-167, Lys-228, Tyr-237, and 246–247 (GV). Asp-113, Asp-115, and Asp-167 together coordinate Mg(2+). Glycyl lysine isopeptide (Lys-Gly) (interchain with G-Cter in SUMO) cross-links involve residues Lys-444, Lys-445, Lys-506, and Lys-507. Residues 490-507 (RKQLHQLLPSHVLQKRKK) carry the Nuclear localization signal 1 motif. A ser/Thr-rich region spans residues 508–643 (HSTEGVKLTA…TKVPNPIVGV (136 aa)). Residues 523–534 (LDLSMDSDNSMS) are compositionally biased toward low complexity. The disordered stretch occupies residues 523–725 (LDLSMDSDNS…SDIPALPANP (203 aa)). Residues 535–557 (VPSPTSAMKTSPLNSSGSSQGRN) are compositionally biased toward polar residues. The residue at position 537 (Ser-537) is a Phosphoserine; by MAPK. The residue at position 558 (Ser-558) is a Phosphoserine. The span at 566 to 582 (ASVTSIQASEVSVPQAN) shows a compositional bias: polar residues. 2 stretches are compositionally biased toward low complexity: residues 583-594 (SSESPGGPSSES) and 611-622 (TVSRVVSSTRLV). N6-acetyllysine occurs at positions 635 and 644. Residues 644–659 (KRTSSPNKEESPKKTK) carry the Nuclear localization signal 2 motif. Basic and acidic residues-rich tracts occupy residues 650–660 (NKEESPKKTKT) and 676–686 (GHDKTETKEQV). The segment at 671 to 739 (CLALSGHDKT…KNSIKLRLNR (69 aa)) is required for interaction with NUDT21. A compositionally biased stretch (polar residues) spans 691–715 (SAVQSETVPASASLLASQKTSSTDL). Position 730 is an N6-acetyllysine; alternate (Lys-730). Lys-730 participates in a covalent cross-link: Glycyl lysine isopeptide (Lys-Gly) (interchain with G-Cter in SUMO); alternate. Residue Ser-732 is modified to Phosphoserine. N6-acetyllysine; alternate is present on Lys-734. Lys-734 is covalently cross-linked (Glycyl lysine isopeptide (Lys-Gly) (interchain with G-Cter in SUMO); alternate).

This sequence belongs to the poly(A) polymerase family. In terms of assembly, monomer. Found in a complex with CPSF1, FIP1L1 and PAPOLA. Interacts with AHCYL1 and FIP1L1; the interaction with AHCYL1 seems to increase interaction with FIP1L1. Interacts with NUDT21; the interaction is diminished by acetylation. Interacts with KPNB1; the interaction promotes PAP nuclear import and is inhibited by acetylation of PAP. Mg(2+) serves as cofactor. It depends on Mn(2+) as a cofactor. Post-translationally, polysumoylated. Varying sumoylation depending on tissue- and cell-type. Highly sumoylated in bladder and NIH 3T3 cells. Sumoylation is required for nuclear localization and enhances PAP stability. Desumoylated by SENP1. Inhibits polymerase activity. Hyperphosphorylation on multiple CDK2 consensus and non-consensus sites in the C-terminal Ser/Thr-rich region represses PAP activity in late M-phase. Phosphorylation/dephosphorylation may regulate the interaction between PAP and CPSF. In terms of processing, acetylated in the C-terminus. Acetylation decreases interaction with NUDT21 and KPNB1, and inhibits nuclear localization through inhibiting binding to the importin alpha/beta complex. As to expression, expressed in brain, thymus, lung, kidney, bladder, testis and spleen.

Its subcellular location is the nucleus. The catalysed reaction is RNA(n) + ATP = RNA(n)-3'-adenine ribonucleotide + diphosphate. Its function is as follows. Polymerase that creates the 3'-poly(A) tail of mRNA's. Also required for the endoribonucleolytic cleavage reaction at some polyadenylation sites. May acquire specificity through interaction with a cleavage and polyadenylation specificity factor (CPSF) at its C-terminus. The polypeptide is Poly(A) polymerase alpha (Papola) (Mus musculus (Mouse)).